The following is a 122-amino-acid chain: Large ribosomal subunit protein uL14 (122 aa).

This sequence belongs to the universal ribosomal protein uL14 family. As to quaternary structure, part of the 50S ribosomal subunit. Forms a cluster with proteins L3 and L19. In the 70S ribosome, L14 and L19 interact and together make contacts with the 16S rRNA in bridges B5 and B8.

In terms of biological role, binds to 23S rRNA. Forms part of two intersubunit bridges in the 70S ribosome. This Exiguobacterium sp. (strain ATCC BAA-1283 / AT1b) protein is Large ribosomal subunit protein uL14.